The following is a 491-amino-acid chain: Sodium-dependent glucose transporter 1 (491 aa).

The next 11 helical transmembrane spans lie at F26–F46, H52–C72, V81–L101, F119–L139, L165–F185, A210–G230, L255–Y275, G277–F297, L303–F323, S338–L358, and F365–V385. 2 disordered regions span residues A397–Q425 and N438–D491. The segment covering M416–Q425 has biased composition (acidic residues). The span at Q440–P458 shows a compositional bias: polar residues.

The protein belongs to the major facilitator superfamily.

The protein localises to the apical cell membrane. In terms of biological role, may function as a sodium-dependent glucose transporter. Potential channels for urea in the inner medulla of kidney. This Xenopus laevis (African clawed frog) protein is Sodium-dependent glucose transporter 1 (mfsd4b).